A 308-amino-acid chain; its full sequence is Pseudouridine-5'-phosphate glycosidase (308 aa).

Glu28 serves as the catalytic Proton donor. Positions 89 and 109 each coordinate substrate. Residue Asp141 participates in Mn(2+) binding. Residue 143-145 coordinates substrate; that stretch reads SAD. Residue Lys162 is the Nucleophile of the active site.

It belongs to the pseudouridine-5'-phosphate glycosidase family. As to quaternary structure, homotrimer. It depends on Mn(2+) as a cofactor.

It catalyses the reaction D-ribose 5-phosphate + uracil = psi-UMP + H2O. Functionally, catalyzes the reversible cleavage of pseudouridine 5'-phosphate (PsiMP) to ribose 5-phosphate and uracil. Functions biologically in the cleavage direction, as part of a pseudouridine degradation pathway. The sequence is that of Pseudouridine-5'-phosphate glycosidase from Brachyspira hyodysenteriae (strain ATCC 49526 / WA1).